We begin with the raw amino-acid sequence, 305 residues long: tRNA uridine(34) hydroxylase (305 aa).

A Rhodanese domain is found at aspartate 130–serine 228. Catalysis depends on cysteine 188, which acts as the Cysteine persulfide intermediate.

The protein belongs to the TrhO family.

The enzyme catalyses uridine(34) in tRNA + AH2 + O2 = 5-hydroxyuridine(34) in tRNA + A + H2O. Catalyzes oxygen-dependent 5-hydroxyuridine (ho5U) modification at position 34 in tRNAs. The chain is tRNA uridine(34) hydroxylase from Synechococcus sp. (strain CC9902).